Reading from the N-terminus, the 204-residue chain is Somatotropin (204 aa).

The signal sequence occupies residues 1–17; the sequence is MDRVVLMLSVLSLGVSS. Gln-18 bears the Pyrrolidone carboxylic acid mark. His-36 lines the Zn(2+) pocket. Cys-69 and Cys-177 are joined by a disulfide. Glu-186 lines the Zn(2+) pocket. Residues Cys-194 and Cys-202 are joined by a disulfide bond.

Belongs to the somatotropin/prolactin family.

It is found in the secreted. In terms of biological role, growth hormone plays an important role in growth control and is involved in the regulation of several anabolic processes. Implicated as an osmoregulatory substance important for seawater adaptation. The chain is Somatotropin (gh) from Acanthopagrus butcheri (Australian black bream).